The sequence spans 384 residues: Galactokinase (384 aa).

A substrate-binding site is contributed by 34 to 37; it reads EHTD. 123-129 lines the ATP pocket; sequence SSGLSSS. Positions 129 and 161 each coordinate Mg(2+). Asp-173 functions as the Proton acceptor in the catalytic mechanism. Tyr-222 contacts substrate.

This sequence belongs to the GHMP kinase family. GalK subfamily.

The protein localises to the cytoplasm. It carries out the reaction alpha-D-galactose + ATP = alpha-D-galactose 1-phosphate + ADP + H(+). It participates in carbohydrate metabolism; galactose metabolism. Functionally, catalyzes the transfer of the gamma-phosphate of ATP to D-galactose to form alpha-D-galactose-1-phosphate (Gal-1-P). This Glaesserella parasuis serovar 5 (strain SH0165) (Haemophilus parasuis) protein is Galactokinase.